A 790-amino-acid chain; its full sequence is Mitochondrial intermediate peptidase (790 aa).

A mitochondrion-targeting transit peptide spans 1–29; sequence MLKRLARNNSSPWICSRCLQQSQRQRRFN. His570 is a Zn(2+) binding site. Glu571 is an active-site residue. His574 and His577 together coordinate Zn(2+).

Belongs to the peptidase M3 family. The cofactor is Zn(2+).

The protein resides in the mitochondrion matrix. It carries out the reaction Release of an N-terminal octapeptide as second stage of processing of some proteins imported into the mitochondrion.. Functionally, cleaves proteins, imported into the mitochondrion, to their mature size. While most mitochondrial precursor proteins are processed to the mature form in one step by mitochondrial processing peptidase (MPP), the sequential cleavage by MIP of an octapeptide after initial processing by MPP is a required step for a subgroup of nuclear-encoded precursor proteins destined for the matrix or the inner membrane. The protein is Mitochondrial intermediate peptidase (OCT1) of Phaeosphaeria nodorum (strain SN15 / ATCC MYA-4574 / FGSC 10173) (Glume blotch fungus).